A 296-amino-acid chain; its full sequence is 4-hydroxybenzoate octaprenyltransferase (296 aa).

A run of 8 helical transmembrane segments spans residues 28–48, 51–71, 102–122, 143–163, 174–194, 212–232, 233–253, and 274–294; these read IGTL…SDGI, LAVL…GCVI, LLLT…LNHL, FFPI…PMAF, AWIL…VYAM, FGRY…LLMA, VLGA…IVLL, and FLAN…HTFF.

This sequence belongs to the UbiA prenyltransferase family. Mg(2+) is required as a cofactor.

Its subcellular location is the cell inner membrane. It catalyses the reaction all-trans-octaprenyl diphosphate + 4-hydroxybenzoate = 4-hydroxy-3-(all-trans-octaprenyl)benzoate + diphosphate. It participates in cofactor biosynthesis; ubiquinone biosynthesis. Its function is as follows. Catalyzes the prenylation of para-hydroxybenzoate (PHB) with an all-trans polyprenyl group. Mediates the second step in the final reaction sequence of ubiquinone-8 (UQ-8) biosynthesis, which is the condensation of the polyisoprenoid side chain with PHB, generating the first membrane-bound Q intermediate 3-octaprenyl-4-hydroxybenzoate. The chain is 4-hydroxybenzoate octaprenyltransferase from Neisseria gonorrhoeae (strain NCCP11945).